The sequence spans 396 residues: 1-deoxy-D-xylulose 5-phosphate reductoisomerase (396 aa).

Positions 10, 11, 12, 13, and 123 each coordinate NADPH. Residue Lys124 participates in 1-deoxy-D-xylulose 5-phosphate binding. Glu125 lines the NADPH pocket. Asp149 is a binding site for Mn(2+). Residues Ser150, Glu151, Ser185, and His208 each contribute to the 1-deoxy-D-xylulose 5-phosphate site. Position 151 (Glu151) interacts with Mn(2+). Position 214 (Gly214) interacts with NADPH. 4 residues coordinate 1-deoxy-D-xylulose 5-phosphate: Ser221, Asn226, Lys227, and Glu230. Mn(2+) is bound at residue Glu230.

The protein belongs to the DXR family. Requires Mg(2+) as cofactor. It depends on Mn(2+) as a cofactor.

It catalyses the reaction 2-C-methyl-D-erythritol 4-phosphate + NADP(+) = 1-deoxy-D-xylulose 5-phosphate + NADPH + H(+). It participates in isoprenoid biosynthesis; isopentenyl diphosphate biosynthesis via DXP pathway; isopentenyl diphosphate from 1-deoxy-D-xylulose 5-phosphate: step 1/6. In terms of biological role, catalyzes the NADPH-dependent rearrangement and reduction of 1-deoxy-D-xylulose-5-phosphate (DXP) to 2-C-methyl-D-erythritol 4-phosphate (MEP). In Shewanella sp. (strain ANA-3), this protein is 1-deoxy-D-xylulose 5-phosphate reductoisomerase.